We begin with the raw amino-acid sequence, 269 residues long: Hydroxyethylthiazole kinase (269 aa).

M42 serves as a coordination point for substrate. 2 residues coordinate ATP: R118 and S164. G191 is a substrate binding site.

This sequence belongs to the Thz kinase family. Requires Mg(2+) as cofactor.

The catalysed reaction is 5-(2-hydroxyethyl)-4-methylthiazole + ATP = 4-methyl-5-(2-phosphooxyethyl)-thiazole + ADP + H(+). It functions in the pathway cofactor biosynthesis; thiamine diphosphate biosynthesis; 4-methyl-5-(2-phosphoethyl)-thiazole from 5-(2-hydroxyethyl)-4-methylthiazole: step 1/1. Its function is as follows. Catalyzes the phosphorylation of the hydroxyl group of 4-methyl-5-beta-hydroxyethylthiazole (THZ). The polypeptide is Hydroxyethylthiazole kinase (Listeria welshimeri serovar 6b (strain ATCC 35897 / DSM 20650 / CCUG 15529 / CIP 8149 / NCTC 11857 / SLCC 5334 / V8)).